We begin with the raw amino-acid sequence, 152 residues long: UPF0178 protein SaurJH9_0705 (152 aa).

This sequence belongs to the UPF0178 family.

The chain is UPF0178 protein SaurJH9_0705 from Staphylococcus aureus (strain JH9).